The sequence spans 457 residues: Putative zinc finger CCCH domain-containing protein 21 (457 aa).

Disordered regions lie at residues 51 to 73, 102 to 130, 195 to 221, and 280 to 329; these read PTSSVSDGGGGGGGGYNSPARAS, LESPSSCISDGRGGGFGSPTSAFPPEKLL, TSPSSCVSDGRSGGYSSPLGASAERER, and RKQA…RLRV. Positions 57–66 are enriched in gly residues; the sequence is DGGGGGGGGY. The stretch at 215–276 forms a coiled coil; the sequence is ASAEREREVR…HLSLLLEELE (62 aa). 2 consecutive C3H1-type zinc fingers follow at residues 382-409 and 419-447; these read AAKTELCNKWERGACPYGARCRFAHGLQ and RYKTLPCQMFAAASGCPYGHRCHFRHSPL.

This is Putative zinc finger CCCH domain-containing protein 21 from Oryza sativa subsp. japonica (Rice).